A 277-amino-acid polypeptide reads, in one-letter code: Ribonuclease HII (277 aa).

The interval 1 to 32 is disordered; sequence MIRNQANKPGRAKAATAARKSPLTKSAAKPAA. The segment covering 20 to 32 has biased composition (low complexity); it reads KSPLTKSAAKPAA. The RNase H type-2 domain occupies 64 to 252; the sequence is WPVAGCDEAG…VVAARRKHQP (189 aa). A divalent metal cation-binding residues include aspartate 70, glutamate 71, and aspartate 161.

The protein belongs to the RNase HII family. The cofactor is Mn(2+). Mg(2+) serves as cofactor.

The protein localises to the cytoplasm. The catalysed reaction is Endonucleolytic cleavage to 5'-phosphomonoester.. In terms of biological role, endonuclease that specifically degrades the RNA of RNA-DNA hybrids. This chain is Ribonuclease HII, found in Bradyrhizobium sp. (strain ORS 278).